We begin with the raw amino-acid sequence, 369 residues long: Probable N-acetyltransferase 16 (369 aa).

The disordered stretch occupies residues 1-49; it reads MKLEASCGTATSEVPKPEKKTARDAEPSSETRPQEVEAEPRSGSGPEAE. Positions 15-26 are enriched in basic and acidic residues; sequence PKPEKKTARDAE. The N-acetyltransferase domain occupies 53 to 188; sequence LDFVVATERE…QGILLVRFNA (136 aa).

Functionally, probable N-acetyltransferase. Shows only trace activity toward L-His and no N-acetyltransferase activity toward other amino acids. The physiological substrate of this enzyme is unknown. The polypeptide is Probable N-acetyltransferase 16 (NAT16) (Homo sapiens (Human)).